The sequence spans 36 residues: Potassium channel toxin alpha-KTx 16.1 (36 aa).

Intrachain disulfides connect Cys7–Cys28, Cys13–Cys33, and Cys17–Cys35.

It belongs to the short scorpion toxin superfamily. Potassium channel inhibitor family. Alpha-KTx 16 subfamily. Expressed by the venom gland.

The protein resides in the secreted. In terms of biological role, blocks calcium-activated potassium channels. This Hottentotta tamulus (Eastern Indian scorpion) protein is Potassium channel toxin alpha-KTx 16.1.